Consider the following 156-residue polypeptide: Small ribosomal subunit protein uS7c (156 aa).

It belongs to the universal ribosomal protein uS7 family. In terms of assembly, part of the 30S ribosomal subunit.

It is found in the plastid. Its subcellular location is the chloroplast. One of the primary rRNA binding proteins, it binds directly to 16S rRNA where it nucleates assembly of the head domain of the 30S subunit. The sequence is that of Small ribosomal subunit protein uS7c (rps7) from Pisum sativum (Garden pea).